The primary structure comprises 388 residues: Flavin-dependent monooxygenase (388 aa).

FAD contacts are provided by residues 12–15, 34–36, 44–47, Arg105, Tyr267, Asp289, and 296–302; these read VGVA, EKS, QALD, and PLSGQGN.

The protein belongs to the aromatic-ring hydroxylase family. FAD is required as a cofactor.

The enzyme catalyses a tetracycline + NADPH + O2 + H(+) = a (1S,10aS)-3-(CONH2)-1-(Me2N)-3,3a,4,6-(HO)4-2,5-dioxo-1H,10aH,11H,11aH-cyclopenta[b]anthracene + CO + NADP(+) + H2O. It carries out the reaction 7-chlorotetracycline + NADPH + O2 + H(+) = (1S,10S,10aS)-3-(CONH2)-9-Cl-1-(Me2N)-3,3a,4,10-(HO)4-10-Me-2,5-dioxo-1H,10aH,11H,11aH-cyclopenta[b]anthracen-6-olate + CO + NADP(+) + H2O. Inhibited by anhydrotetracycline. In terms of biological role, an FAD-requiring monooxygenase active on tetracycline antibiotic and some of its derivatives, which leads to their inactivation. Expression in E.coli confers high resistance to tetracycline and oxytetracycline, does not confer resistance to minocycline or tigecycline. Degrades tetracycline and oxytetracycline; the reaction requires NADPH. Degrades and confers resistance to chlortetracycline. This Unknown prokaryotic organism protein is Flavin-dependent monooxygenase (tet(50)).